We begin with the raw amino-acid sequence, 142 residues long: UPF0102 protein Bcep1808_0248 (142 aa).

The protein belongs to the UPF0102 family.

This is UPF0102 protein Bcep1808_0248 from Burkholderia vietnamiensis (strain G4 / LMG 22486) (Burkholderia cepacia (strain R1808)).